We begin with the raw amino-acid sequence, 388 residues long: Ribonuclease D (388 aa).

The region spanning 24–191 (QYVSDEASLN…LYPQLADKLK (168 aa)) is the 3'-5' exonuclease domain. Residues 230-310 (TEHQLAYLKV…QTADLSNPPE (81 aa)) form the HRDC domain.

Belongs to the RNase D family. The cofactor is a divalent metal cation.

It localises to the cytoplasm. It catalyses the reaction Exonucleolytic cleavage that removes extra residues from the 3'-terminus of tRNA to produce 5'-mononucleotides.. Functionally, exonuclease involved in the 3' processing of various precursor tRNAs. Initiates hydrolysis at the 3'-terminus of an RNA molecule and releases 5'-mononucleotides. This chain is Ribonuclease D, found in Shewanella sp. (strain ANA-3).